Reading from the N-terminus, the 3411-residue chain is Genome polyprotein (3411 aa).

Residues 1-104 (MSGRKAQGKT…LSSRKRRSHD (104 aa)) lie on the Cytoplasmic side of the membrane. Positions 38–72 (PGPSRGVQGFIFFFLFNILTGKKITAHLKRLWKML) are hydrophobic; homodimerization of capsid protein C. The propeptide at 102–121 (SHDVLTVQFLILGMLLMTGG) is ER anchor for the capsid protein C, removed in mature form by serine protease NS3. Residues 105–125 (VLTVQFLILGMLLMTGGVTLV) traverse the membrane as a helical segment. Topologically, residues 126-244 (RKNRWLLLNV…GERQLQKIER (119 aa)) are extracellular. N-linked (GlcNAc...) asparagine; by host glycans are attached at residues asparagine 134 and asparagine 150. The chain crosses the membrane as a helical span at residues 245-265 (WLVRNPFFAVTALTIAYLVGS). Topologically, residues 266 to 270 (NMTQR) are cytoplasmic. A helical membrane pass occupies residues 271–285 (VVIALLVLAVGPAYS). Residues 286–730 (AHCIGITDRD…TVFGSAFQGL (445 aa)) lie on the Extracellular side of the membrane. Cystine bridges form between cysteine 288–cysteine 315, cysteine 345–cysteine 401, cysteine 345–cysteine 406, cysteine 359–cysteine 390, cysteine 377–cysteine 401, cysteine 377–cysteine 406, cysteine 467–cysteine 568, and cysteine 585–cysteine 615. The tract at residues 383–396 (DRGWGNGCGLFGKG) is fusion peptide. The helical transmembrane segment at 731–751 (FGGLNWITKVIMGAVLIWVGI) threads the bilayer. The Extracellular segment spans residues 752-757 (NTRNMT). A helical transmembrane segment spans residues 758–778 (MSMSMILVGVIMMFLSLGVGA). At 779–1132 (DQGCAINFGK…LVRSWVTAGE (354 aa)) the chain is on the extracellular side. 6 cysteine pairs are disulfide-bonded: cysteine 782–cysteine 793, cysteine 833–cysteine 921, cysteine 957–cysteine 1002, cysteine 1058–cysteine 1107, cysteine 1069–cysteine 1091, and cysteine 1090–cysteine 1094. N-linked (GlcNAc...) asparagine; by host glycosylation is found at asparagine 908 and asparagine 986. A helical transmembrane segment spans residues 1133 to 1153 (IHAVPFGLVSMMIAMEVVLRK). Topologically, residues 1154–1201 (RQGPKQMLVGGVVLLGAMLVGQVTLLDLLKLTVAVGLHFHEMNNGGDA) are cytoplasmic. A helical membrane pass occupies residues 1202–1222 (MYMALIAAFSIRPGLLIGFGL). Topologically, residues 1223-1287 (RTLWSPRERL…ILPLMALLTP (65 aa)) are lumenal. The chain crosses the membrane as a helical span at residues 1288-1308 (VTMAEVRLATMLFCTVVIIGV). At 1309-1355 (LHQNSKDTSMQKTIPLVALTLTSYLGLTQPFLGLCAFLATRIFGRRS) the chain is on the cytoplasmic side. Residues 1356–1376 (IPVNEALAAAGLVGVLAGLAF) form a helical membrane-spanning segment. Topologically, residues 1377-1378 (QE) are lumenal. Residues 1379–1399 (MENFLGPIAVGGILMMLVSVA) traverse the membrane as a helical segment. Over 1400-1456 (GRVDGLELKKLGEVSWEEEAEISGSSARYDVALSEQGEFKLLSEEKVPWDQVVMTSL) the chain is Cytoplasmic. Residues 1407 to 1446 (LKKLGEVSWEEEAEISGSSARYDVALSEQGEFKLLSEEKV) are interacts with and activates NS3 protease. The segment at residues 1457–1477 (ALVGAAIHPFALLLVLAGWLF) is an intramembrane region (helical). Over 1478–2157 (HVRGARRSGD…RNALSMMPEA (680 aa)) the chain is Cytoplasmic. Residues 1485–1665 (SGDVLWDIPT…EVKEEGKEEL (181 aa)) form the Peptidase S7 domain. Active-site charge relay system; for serine protease NS3 activity residues include histidine 1537, aspartate 1561, and serine 1622. Positions 1669–1825 (PTMLKKGMTT…HSNGEIEDVQ (157 aa)) constitute a Helicase ATP-binding domain. Residues 1673 to 1676 (KKGM) form an important for RNA-binding region. ATP is bound at residue 1682–1689 (FHPGAGKT). A DEAH box motif is present at residues 1773–1776 (DEAH). In terms of domain architecture, Helicase C-terminal spans 1820–1997 (EIEDVQTDIP…VRGGMVAPLY (178 aa)). Lysine 1877 carries the post-translational modification N6-acetyllysine; by host. The segment at 1942–1961 (AAQRRGRIGRNPNRDGDSYY) is disordered. The helical transmembrane segment at 2158-2178 (MTIVMLFILAGLLTSGMVIFF) threads the bilayer. The Lumenal portion of the chain corresponds to 2179–2186 (MSPKGISR). The helical intramembrane region spans 2187 to 2207 (MSMAMGTMAGCGYLMFLGGVK). Topologically, residues 2208 to 2209 (PT) are lumenal. A helical transmembrane segment spans residues 2210 to 2230 (HISYIMLIFFVLMVVVIPEPG). The Cytoplasmic portion of the chain corresponds to 2231–2241 (QQRSIQDNQVA). Residues 2242 to 2262 (YLIIGILTLVSVVAANELGML) traverse the membrane as a helical segment. At 2263–2293 (EKTKEDLFGKKNLIPSSASPWSWPDLDLKPG) the chain is on the lumenal side. Residues 2294 to 2314 (AAWTVYVGIVTMLSPMLHHWI) constitute an intramembrane region (helical). The Lumenal portion of the chain corresponds to 2315 to 2360 (KVEYGNLSLSGIAQSASVLSFMDKGIPFMKMNISVIILLVSGWNSI). A helical membrane pass occupies residues 2361-2380 (TVMPLLCGIGCAMLHWSLIL). The Cytoplasmic segment spans residues 2381–2421 (PGIKAQQSKLAQRRVFHGVAKNPVVDGNPTVDIEEAPEMPA). The chain crosses the membrane as a helical span at residues 2422–2442 (LYEKKLALYLLLALSLASVAM). The Lumenal segment spans residues 2443-2445 (CRT). Residues 2446-2466 (PFSLAEGIVLASAALGPLIEG) form a helical membrane-spanning segment. The Cytoplasmic segment spans residues 2467-3411 (NTSLLWNGPM…DADLQPGELI (945 aa)). Residues 2507–2771 (GSANGKTLGE…DVILPIGTRS (265 aa)) enclose the mRNA cap 0-1 NS5-type MT domain. Serine 2562 serves as a coordination point for S-adenosyl-L-methionine. Position 2562 is a phosphoserine (serine 2562). The active-site For 2'-O-MTase activity is the lysine 2567. S-adenosyl-L-methionine contacts are provided by glycine 2592, tryptophan 2593, threonine 2610, leucine 2611, aspartate 2637, and isoleucine 2638. The active-site For 2'-O-MTase activity is the aspartate 2652. Residue isoleucine 2653 coordinates S-adenosyl-L-methionine. Catalysis depends on for 2'-O-MTase activity residues lysine 2688 and glutamate 2724. Tyrosine 2726 is a binding site for S-adenosyl-L-methionine. The short motif at 2878–2911 (RKIMKVVNRWLFRHLAREKNPRLCTKEEFIAKVR) is the Nuclear localization signal element. Zn(2+)-binding residues include glutamate 2945, histidine 2949, cysteine 2954, and cysteine 2957. Residues 3035–3187 (GGFYADDTAG…RPIDDRFGLA (153 aa)) enclose the RdRp catalytic domain. Positions 3222, 3238, and 3357 each coordinate Zn(2+).

In the N-terminal section; belongs to the class I-like SAM-binding methyltransferase superfamily. mRNA cap 0-1 NS5-type methyltransferase family. As to quaternary structure, homodimer. Interacts (via N-terminus) with host EXOC1 (via C-terminus); this interaction results in EXOC1 degradation through the proteasome degradation pathway. In terms of assembly, forms heterodimers with envelope protein E in the endoplasmic reticulum and Golgi. Homodimer; in the endoplasmic reticulum and Golgi. Interacts with protein prM. Interacts with non-structural protein 1. As to quaternary structure, homodimer; Homohexamer when secreted. Interacts with envelope protein E. NS1 interacts with NS4B. Interacts with host complement protein CFH; this interaction leads to the degradation of C3. In terms of assembly, interacts (via N-terminus) with serine protease NS3. Forms a heterodimer with serine protease NS3. May form homooligomers. As to quaternary structure, forms a heterodimer with NS2B. Interacts with non-structural protein 2A (via N-terminus). Interacts with NS4B. Interacts with unphosphorylated RNA-directed RNA polymerase NS5; this interaction stimulates RNA-directed RNA polymerase NS5 guanylyltransferase activity. NS3 interacts with host PDCD6IP; this interaction contributes to virion release. In terms of assembly, interacts with serine protease NS3. Homodimer. Interacts with host STAT2; this interaction prevents the establishment of cellular antiviral state. Interacts with serine protease NS3. Interacts with host TRIM23; this interaction leads to NS5 ubiquitination. Specific enzymatic cleavages in vivo yield mature proteins. The nascent capsid protein C contains a C-terminal hydrophobic domain that act as a signal sequence for translocation of prM into the lumen of the ER. Mature capsid protein C is cleaved at a site upstream of this hydrophobic domain by NS3. prM is cleaved in post-Golgi vesicles by a host furin, releasing the mature small envelope protein M, and peptide pr. Non-structural protein 2A-alpha, a C-terminally truncated form of non-structural protein 2A, results from partial cleavage by NS3. Specific enzymatic cleavages in vivo yield mature proteins peptide 2K acts as a signal sequence and is removed from the N-terminus of NS4B by the host signal peptidase in the ER lumen. Signal cleavage at the 2K-4B site requires a prior NS3 protease-mediated cleavage at the 4A-2K site. Post-translationally, cleaved in post-Golgi vesicles by a host furin, releasing the mature small envelope protein M, and peptide pr. This cleavage is incomplete as up to 30% of viral particles still carry uncleaved prM. In terms of processing, N-glycosylated. N-glycosylated. The excreted form is glycosylated and this is required for efficient secretion of the protein from infected cells. Post-translationally, polyubiquitinated; ubiquitination is probably mediated by host TRIM23 and is prerequisite for NS5-STAT2 interaction. NS5 is not ISGylated or sumoylated. In terms of processing, acetylated by host KAT5. Acetylation modulates NS3 RNA-binding and unwinding activities and plays an important positive role for viral replication. Phosphorylated on serines residues. This phosphorylation may trigger NS5 nuclear localization.

Its subcellular location is the virion. The protein localises to the host nucleus. It is found in the host cytoplasm. The protein resides in the host perinuclear region. It localises to the secreted. Its subcellular location is the virion membrane. The protein localises to the host endoplasmic reticulum membrane. It catalyses the reaction Selective hydrolysis of -Xaa-Xaa-|-Yaa- bonds in which each of the Xaa can be either Arg or Lys and Yaa can be either Ser or Ala.. The catalysed reaction is RNA(n) + a ribonucleoside 5'-triphosphate = RNA(n+1) + diphosphate. The enzyme catalyses a ribonucleoside 5'-triphosphate + H2O = a ribonucleoside 5'-diphosphate + phosphate + H(+). It carries out the reaction ATP + H2O = ADP + phosphate + H(+). It catalyses the reaction a 5'-end (5'-triphosphoguanosine)-ribonucleoside in mRNA + S-adenosyl-L-methionine = a 5'-end (N(7)-methyl 5'-triphosphoguanosine)-ribonucleoside in mRNA + S-adenosyl-L-homocysteine. The catalysed reaction is a 5'-end (N(7)-methyl 5'-triphosphoguanosine)-ribonucleoside in mRNA + S-adenosyl-L-methionine = a 5'-end (N(7)-methyl 5'-triphosphoguanosine)-(2'-O-methyl-ribonucleoside) in mRNA + S-adenosyl-L-homocysteine + H(+). Its function is as follows. Plays a role in virus budding by binding to the cell membrane and gathering the viral RNA into a nucleocapsid that forms the core of a mature virus particle. During virus entry, may induce genome penetration into the host cytoplasm after hemifusion induced by the surface proteins. Can migrate to the cell nucleus where it modulates host functions. In terms of biological role, inhibits RNA silencing by interfering with host Dicer. Prevents premature fusion activity of envelope proteins in trans-Golgi by binding to envelope protein E at pH6.0. After virion release in extracellular space, gets dissociated from E dimers. Functionally, acts as a chaperone for envelope protein E during intracellular virion assembly by masking and inactivating envelope protein E fusion peptide. prM is the only viral peptide matured by host furin in the trans-Golgi network probably to avoid catastrophic activation of the viral fusion activity in acidic Golgi compartment prior to virion release. prM-E cleavage is inefficient, and many virions are only partially matured. These uncleaved prM would play a role in immune evasion. Its function is as follows. May play a role in virus budding. Exerts cytotoxic effects by activating a mitochondrial apoptotic pathway through M ectodomain. May display a viroporin activity. In terms of biological role, binds to host cell surface receptor and mediates fusion between viral and cellular membranes. Envelope protein is synthesized in the endoplasmic reticulum in the form of heterodimer with protein prM. They play a role in virion budding in the ER, and the newly formed immature particle is covered with 60 spikes composed of heterodimer between precursor prM and envelope protein E. The virion is transported to the Golgi apparatus where the low pH causes dissociation of PrM-E heterodimers and formation of E homodimers. prM-E cleavage is inefficient, and many virions are only partially matured. These uncleaved prM would play a role in immune evasion. Involved in immune evasion, pathogenesis and viral replication. Once cleaved off the polyprotein, is targeted to three destinations: the viral replication cycle, the plasma membrane and the extracellular compartment. Essential for viral replication. Required for formation of the replication complex and recruitment of other non-structural proteins to the ER-derived membrane structures. Excreted as a hexameric lipoparticle that plays a role against host immune response. Antagonizing the complement function. Binds to the host macrophages and dendritic cells. Inhibits signal transduction originating from Toll-like receptor 3 (TLR3). Functionally, component of the viral RNA replication complex that functions in virion assembly and antagonizes the host immune response. Its function is as follows. Required cofactor for the serine protease function of NS3. May have membrane-destabilizing activity and form viroporins. In terms of biological role, displays three enzymatic activities: serine protease, NTPase and RNA helicase. NS3 serine protease, in association with NS2B, performs its autocleavage and cleaves the polyprotein at dibasic sites in the cytoplasm: C-prM, NS2A-NS2B, NS2B-NS3, NS3-NS4A, NS4A-2K and NS4B-NS5. NS3 RNA helicase binds RNA and unwinds dsRNA in the 3' to 5' direction. Also plays a role in virus assembly. Regulates the ATPase activity of the NS3 helicase activity. NS4A allows NS3 helicase to conserve energy during unwinding. Functionally, functions as a signal peptide for NS4B and is required for the interferon antagonism activity of the latter. Its function is as follows. Induces the formation of ER-derived membrane vesicles where the viral replication takes place. Inhibits interferon (IFN)-induced host STAT1 phosphorylation and nuclear translocation, thereby preventing the establishment of cellular antiviral state by blocking the IFN-alpha/beta pathway. In terms of biological role, replicates the viral (+) and (-) RNA genome, and performs the capping of genomes in the cytoplasm. NS5 methylates viral RNA cap at guanine N-7 and ribose 2'-O positions. Besides its role in RNA genome replication, also prevents the establishment of cellular antiviral state by blocking the interferon-alpha/beta (IFN-alpha/beta) signaling pathway. IFN-I induces binding of NS5 to host IFN-activated transcription factor STAT2, preventing its transcriptional activity. Host TRIM23 is the E3 ligase that interacts with and polyubiquitinates NS5 to promote its binding to STAT2 and trigger IFN-I signaling inhibition. The sequence is that of Genome polyprotein from Yellow fever virus (strain Ghana/Asibi/1927) (YFV).